The chain runs to 241 residues: Endothelial protein C receptor (241 aa).

Residues M1–A17 form the signal peptide. Topologically, residues L18–S212 are extracellular. Residues N49, N66, N138, and N174 are each glycosylated (N-linked (GlcNAc...) asparagine). Intrachain disulfides connect C120-C188 and C221-C234. Residues L213–L233 traverse the membrane as a helical segment. The Cytoplasmic segment spans residues C234 to C241.

Expressed in endothelial cells.

It is found in the membrane. In terms of biological role, binds activated protein C. Enhances protein C activation by the thrombin-thrombomodulin complex; plays a role in the protein C pathway controlling blood coagulation. This chain is Endothelial protein C receptor (PROCR), found in Bos taurus (Bovine).